We begin with the raw amino-acid sequence, 151 residues long: Phosphopantetheine adenylyltransferase (151 aa).

Substrate is bound at residue Thr-9. Residues 9–10 (TF) and His-17 each bind ATP. The substrate site is built by Lys-41, Thr-73, and Arg-87. Residues 88-90 (GIR), Glu-98, and 122-128 (LTCVSST) each bind ATP.

The protein belongs to the bacterial CoaD family. As to quaternary structure, homohexamer. Requires Mg(2+) as cofactor.

The protein localises to the cytoplasm. It catalyses the reaction (R)-4'-phosphopantetheine + ATP + H(+) = 3'-dephospho-CoA + diphosphate. It participates in cofactor biosynthesis; coenzyme A biosynthesis; CoA from (R)-pantothenate: step 4/5. Functionally, reversibly transfers an adenylyl group from ATP to 4'-phosphopantetheine, yielding dephospho-CoA (dPCoA) and pyrophosphate. The sequence is that of Phosphopantetheine adenylyltransferase from Bacteroides thetaiotaomicron (strain ATCC 29148 / DSM 2079 / JCM 5827 / CCUG 10774 / NCTC 10582 / VPI-5482 / E50).